A 172-amino-acid chain; its full sequence is 3-hydroxydecanoyl-[acyl-carrier-protein] dehydratase (172 aa).

The active site involves histidine 71.

It belongs to the thioester dehydratase family. FabA subfamily. In terms of assembly, homodimer.

Its subcellular location is the cytoplasm. It carries out the reaction a (3R)-hydroxyacyl-[ACP] = a (2E)-enoyl-[ACP] + H2O. The catalysed reaction is (3R)-hydroxydecanoyl-[ACP] = (2E)-decenoyl-[ACP] + H2O. The enzyme catalyses (2E)-decenoyl-[ACP] = (3Z)-decenoyl-[ACP]. It participates in lipid metabolism; fatty acid biosynthesis. Its function is as follows. Necessary for the introduction of cis unsaturation into fatty acids. Catalyzes the dehydration of (3R)-3-hydroxydecanoyl-ACP to E-(2)-decenoyl-ACP and then its isomerization to Z-(3)-decenoyl-ACP. Can catalyze the dehydratase reaction for beta-hydroxyacyl-ACPs with saturated chain lengths up to 16:0, being most active on intermediate chain length. The chain is 3-hydroxydecanoyl-[acyl-carrier-protein] dehydratase from Salmonella agona (strain SL483).